The sequence spans 94 residues: Small ribosomal subunit protein bS6 (94 aa).

The protein belongs to the bacterial ribosomal protein bS6 family.

Functionally, binds together with bS18 to 16S ribosomal RNA. The chain is Small ribosomal subunit protein bS6 from Clostridium botulinum (strain Hall / ATCC 3502 / NCTC 13319 / Type A).